The sequence spans 1369 residues: MutS protein homolog 5 (1369 aa).

Residues 138 to 190 (IYEDGTTEEGTSEDTVPTWDSSLAYSTDETTAEKEEKEEDEDDDDEGLPAKLN) are disordered. Residues 173–184 (EKEEDEDDDDEG) show a composition bias toward acidic residues. Residue 639–646 (GPNACGKS) participates in ATP binding. Disordered stretches follow at residues 880-915 (SMRN…SVLS), 935-1135 (KKKK…RSSN), 1153-1182 (LKSQ…HSQN), and 1248-1278 (NFIF…SSIS). A compositionally biased stretch (basic and acidic residues) spans 884-894 (VSEEIEKERSE). Polar residues-rich tracts occupy residues 895–915 (ASTP…SVLS) and 941–950 (TGSSMESSMS). The segment covering 954-967 (FQEEDEGTEGEEDQ) has biased composition (acidic residues). Residues 991–1003 (QSINSRHSFSTRT) are compositionally biased toward polar residues. The span at 1024–1037 (STSTSSPGPSASKS) shows a compositional bias: low complexity. The segment covering 1049-1065 (VKESQVLETPKQLSISS) has biased composition (polar residues). Basic and acidic residues predominate over residues 1073–1084 (SSEKDVISRVSE). Composition is skewed to polar residues over residues 1111-1124 (KNRS…QSAR) and 1153-1167 (LKSQ…TPRS). The span at 1254-1263 (PEPRSSEKQR) shows a compositional bias: basic and acidic residues.

It belongs to the DNA mismatch repair MutS family. As to quaternary structure, heterooligomer of him-14 and msh-5. Interacts with the brc-1-brd-1 heterodimer. As to expression, expressed in the germline.

The protein localises to the chromosome. Functionally, crucial component in meiotic recombination, functioning at some point after the initiation step of recombination. Plays a role in promoting the crossover outcome of meiotic recombination events. Required for formation of normal meiotic crossover, and crossover and chiasmata generated by artificially made DNA breaks. Together with him-14 and zhp-3 plays a role in the activation of DNA damage-dependent apoptosis at the DNA damage checkpoint in pachytene cells. The polypeptide is MutS protein homolog 5 (Caenorhabditis elegans).